The following is a 101-amino-acid chain: Urease subunit beta (101 aa).

Belongs to the urease beta subunit family. As to quaternary structure, heterotrimer of UreA (gamma), UreB (beta) and UreC (alpha) subunits. Three heterotrimers associate to form the active enzyme.

Its subcellular location is the cytoplasm. It catalyses the reaction urea + 2 H2O + H(+) = hydrogencarbonate + 2 NH4(+). The protein operates within nitrogen metabolism; urea degradation; CO(2) and NH(3) from urea (urease route): step 1/1. The polypeptide is Urease subunit beta (Dinoroseobacter shibae (strain DSM 16493 / NCIMB 14021 / DFL 12)).